We begin with the raw amino-acid sequence, 2073 residues long: Histone acetyltransferase KAT6B (2073 aa).

Residues 1–77 (MVKLANPLYT…LASYKDPDNP (77 aa)) form the SAMD1-like winged helix (WH) domain. The disordered stretch occupies residues 72-97 (KDPDNPGRFSSVKPGTFPKSAKGSRG). Residues 103 to 176 (RNVDWNKLLR…KDGPQYRVNY (74 aa)) enclose the H15 domain. 2 PHD-type zinc fingers span residues 213-272 (IPIC…CKTC) and 269-320 (CKTC…CRPK). Ser-355 bears the Phosphoserine mark. Disordered stretches follow at residues 360–409 (EGSM…RPGA), 442–531 (FTPS…VPSL), 553–583 (TQGQSRKKGHPSYAPPKRMRRKTELSSTAKS), and 639–663 (VTPQMGTPSPGKGSLTDGRIKPDQD). The negatively regulates HAT activity stretch occupies residues 361 to 717 (GSMNAFTGRG…ECESGVEDCG (357 aa)). Residues 379-399 (KVCTTPSSGHAASGKDSSSRL) show a composition bias toward polar residues. The segment covering 447–460 (DGRRSRGEIIDFSK) has biased composition (basic and acidic residues). Over residues 470–485 (QKQSCTSHVLATGTTQ) the composition is skewed to polar residues. Residues 488-499 (KPPPSSLPPPTP) show a composition bias toward pro residues. Over residues 501-531 (SGQSPSSQKSSTATSSPSPQSSSSQCSVPSL) the composition is skewed to low complexity. A Phosphoserine modification is found at Ser-647. Lys-673 is covalently cross-linked (Glycyl lysine isopeptide (Lys-Gly) (interchain with G-Cter in SUMO2)). One can recognise an MYST-type HAT domain in the interval 715 to 989 (DCGRYPSVIE…LDPDSLRWTP (275 aa)). The catalytic stretch occupies residues 718 to 1008 (RYPSVIEFGK…EEEREAEKEA (291 aa)). The segment at 748–773 (LYLCEFCLKYMKSKNILLRHSKKCGW) adopts a C2HC MYST-type zinc-finger fold. The tract at residues 752-1008 (EFCLKYMKSK…EEEREAEKEA (257 aa)) is interaction with BRPF1. Lys-815 bears the N6-acetyllysine; by autocatalysis mark. Residues 856–860 (SCIMI) and 865–871 (QRQGFGR) contribute to the acetyl-CoA site. Glu-891 acts as the Proton donor/acceptor in catalysis. Ser-895 contacts acetyl-CoA. Disordered stretches follow at residues 1022-1452 (EQEI…FKEV), 1484-1538 (SCNS…MEID), and 1580-1619 (QSPQIATTLDDCQQSDHSSPVSSVHSHPGQSVRSVNSPSV). The segment covering 1025–1043 (ILSTRANSRQSPAKVQSKN) has biased composition (polar residues). An N6-acetyllysine mark is found at Lys-1038, Lys-1042, and Lys-1044. Ser-1048 bears the Phosphoserine mark. The span at 1069–1105 (SEEEEEEEDEEEEEEEEEEEEDEEEEEEEEEEEEEEN) shows a compositional bias: acidic residues. Polar residues predominate over residues 1106–1117 (IQSSPPRLTKPQ). Residues 1121 to 1140 (IKRKRPFVLKKKRGRKRRRI) are compositionally biased toward basic residues. Low complexity predominate over residues 1142–1155 (SSVTTETISETTEV). Over residues 1187–1200 (PVLRKAFQHQPGKK) the composition is skewed to basic residues. Composition is skewed to basic and acidic residues over residues 1229–1243 (SNLKEGSKDNPEPLK), 1306–1315 (RIEEEVKETG), and 1341–1350 (EKPEDDLIKP). Positions 1351 to 1374 (EEEEEEEEEEEEEEEEEEGEEEEG) are enriched in acidic residues. Basic and acidic residues-rich tracts occupy residues 1378–1390 (VEKDPDGAKSQEK) and 1396–1407 (STEKEDSARLDD). Acidic residues predominate over residues 1408-1417 (HEEEEEEDEE). A compositionally biased stretch (basic and acidic residues) spans 1433–1452 (HMESAEVEKEELPRESFKEV). A compositionally biased stretch (acidic residues) spans 1498 to 1507 (AVPESDEEPP). Residues 1513–1529 (QKQDQKNSKEVDTEFKE) are compositionally biased toward basic and acidic residues. Residues 1560 to 2073 (QDCAETQEAC…QSLNGSYMRR (514 aa)) form an interaction with RUNX1 and RUNX2 region. Positions 1580–1591 (QSPQIATTLDDC) are enriched in polar residues. Positions 1594–1611 (SDHSSPVSSVHSHPGQSV) are enriched in low complexity.

This sequence belongs to the MYST (SAS/MOZ) family. As to quaternary structure, component of the MOZ/MORF complex composed at least of ING5, KAT6A, KAT6B, MEAF6 and one of BRPF1, BRD1/BRPF2 and BRPF3. Interacts with RUNX1 and RUNX2. Autoacetylated. Autoacetylation at Lys-815 is required for proper function. As to expression, ubiquitously expressed, with high levels in heart, pancreas, testis and ovary.

It is found in the nucleus. The enzyme catalyses L-lysyl-[protein] + acetyl-CoA = N(6)-acetyl-L-lysyl-[protein] + CoA + H(+). In terms of biological role, histone acetyltransferase which may be involved in both positive and negative regulation of transcription. Required for RUNX2-dependent transcriptional activation. May be involved in cerebral cortex development. Component of the MOZ/MORF complex which has a histone H3 acetyltransferase activity. This chain is Histone acetyltransferase KAT6B (KAT6B), found in Homo sapiens (Human).